Consider the following 436-residue polypeptide: Bifunctional protein GlmU (436 aa).

A pyrophosphorylase region spans residues 1 to 225; it reads MNNNTSIIIL…EQNFMGINDK (225 aa). UDP-N-acetyl-alpha-D-glucosamine is bound by residues 10 to 13, K24, Q76, and 83 to 84; these read LAAG and GT. Residue D104 coordinates Mg(2+). UDP-N-acetyl-alpha-D-glucosamine contacts are provided by G137, E151, N166, and N223. N223 provides a ligand contact to Mg(2+). The linker stretch occupies residues 226–246; sequence FQLSIAEKIMQDEIKQNLMKA. The N-acetyltransferase stretch occupies residues 247-436; sequence GVLMRMPESI…KFFGKDDVKK (190 aa). 2 residues coordinate UDP-N-acetyl-alpha-D-glucosamine: R310 and K327. The active-site Proton acceptor is the H338. Y341 and N352 together coordinate UDP-N-acetyl-alpha-D-glucosamine. Acetyl-CoA is bound by residues 361–362, S380, A398, and R415; that span reads NY.

In the N-terminal section; belongs to the N-acetylglucosamine-1-phosphate uridyltransferase family. This sequence in the C-terminal section; belongs to the transferase hexapeptide repeat family. In terms of assembly, homotrimer. Mg(2+) is required as a cofactor.

It is found in the cytoplasm. It catalyses the reaction alpha-D-glucosamine 1-phosphate + acetyl-CoA = N-acetyl-alpha-D-glucosamine 1-phosphate + CoA + H(+). The catalysed reaction is N-acetyl-alpha-D-glucosamine 1-phosphate + UTP + H(+) = UDP-N-acetyl-alpha-D-glucosamine + diphosphate. It participates in nucleotide-sugar biosynthesis; UDP-N-acetyl-alpha-D-glucosamine biosynthesis; N-acetyl-alpha-D-glucosamine 1-phosphate from alpha-D-glucosamine 6-phosphate (route II): step 2/2. It functions in the pathway nucleotide-sugar biosynthesis; UDP-N-acetyl-alpha-D-glucosamine biosynthesis; UDP-N-acetyl-alpha-D-glucosamine from N-acetyl-alpha-D-glucosamine 1-phosphate: step 1/1. Its pathway is bacterial outer membrane biogenesis; LPS lipid A biosynthesis. Its function is as follows. Catalyzes the last two sequential reactions in the de novo biosynthetic pathway for UDP-N-acetylglucosamine (UDP-GlcNAc). The C-terminal domain catalyzes the transfer of acetyl group from acetyl coenzyme A to glucosamine-1-phosphate (GlcN-1-P) to produce N-acetylglucosamine-1-phosphate (GlcNAc-1-P), which is converted into UDP-GlcNAc by the transfer of uridine 5-monophosphate (from uridine 5-triphosphate), a reaction catalyzed by the N-terminal domain. In Campylobacter concisus (strain 13826), this protein is Bifunctional protein GlmU.